The primary structure comprises 386 residues: Patatin group M-3 (386 aa).

The signal sequence occupies residues 1–23; sequence MATTKSFLILFFMILATTSSTCA. The region spanning 32–229 is the PNPLA domain; sequence LSIDGGGIKG…TVGDPALLSL (198 aa). Residues 36-41 carry the GXGXXG motif; sequence GGGIKG. A GXSXG motif is present at residues 75–79; sequence GTSTG. The Nucleophile role is filled by serine 77. A glycan (N-linked (GlcNAc...) asparagine) is linked at asparagine 115. Aspartate 215 functions as the Proton acceptor in the catalytic mechanism. The short motif at 215-217 is the DGA/G element; the sequence is DGG. Residues 321-384 are a coiled coil; the sequence is ENALTGTTTE…DRKKLRANKA (64 aa).

It belongs to the patatin family. In terms of tissue distribution, tuber.

It is found in the vacuole. Probable lipolytic acyl hydrolase (LAH), an activity which is thought to be involved in the response of tubers to pathogens. This is Patatin group M-3 from Solanum tuberosum (Potato).